Here is a 627-residue protein sequence, read N- to C-terminus: Monoterpene synthase like 1, chloroplastic (627 aa).

The transit peptide at 1–50 (MDLISVLPSTSKSCVCMHKPLSSSTHKLKPFCRTIRILGMPRPRKSVLMA) directs the protein to the chloroplast. Asp-378, Asp-382, and Asp-530 together coordinate Mg(2+). The DDXXD motif signature appears at 378–382 (DDMYD).

The protein belongs to the terpene synthase family. Tpsd subfamily. Requires Mg(2+) as cofactor. Mn(2+) serves as cofactor.

Its subcellular location is the plastid. It is found in the chloroplast. Its pathway is terpene metabolism; oleoresin biosynthesis. The protein operates within secondary metabolite biosynthesis; terpenoid biosynthesis. Functionally, monoterpene synthase (TPS) involved in the biosynthesis of monoterpene natural products included in conifer oleoresin secretions and volatile emissions; these compounds contribute to biotic and abiotic stress defense against herbivores and pathogens. This is Monoterpene synthase like 1, chloroplastic from Pinus contorta (Shore pine).